We begin with the raw amino-acid sequence, 399 residues long: Sex hormone-binding globulin (399 aa).

An N-terminal signal peptide occupies residues 1–29; the sequence is MENRDSVASLLLLLLLLPPPHTHQGQVLR. Laminin G-like domains are found at residues 43 to 214 and 221 to 387; these read RYLS…LGNC and GLFF…THSC. Asparagine 160 carries N-linked (GlcNAc...) asparagine glycosylation. Residues cysteine 191 and cysteine 214 are joined by a disulfide bond. N-linked (GlcNAc...) asparagine glycans are attached at residues asparagine 270, asparagine 353, asparagine 377, and asparagine 393. Cysteines 359 and 387 form a disulfide.

In terms of assembly, homodimer. Post-translationally, differentially glycosylated in liver (SHBG) and testis (ABP).

It localises to the secreted. Functionally, functions as an androgen transport protein, but may also be involved in receptor mediated processes. Each dimer binds one molecule of steroid. Specific for 5-alpha-dihydrotestosterone, testosterone, and 17-beta-estradiol. Regulates the plasma metabolic clearance rate of steroid hormones by controlling their plasma concentration. In Phodopus sungorus (Striped hairy-footed hamster), this protein is Sex hormone-binding globulin (SHBG).